The following is a 43-amino-acid chain: Protein PsbN (43 aa).

Residues 4–24 (ATVLSITFAVILIAITGLAVY) form a helical membrane-spanning segment.

This sequence belongs to the PsbN family.

It localises to the cellular thylakoid membrane. In terms of biological role, may play a role in photosystem I and II biogenesis. In Synechocystis sp. (strain ATCC 27184 / PCC 6803 / Kazusa), this protein is Protein PsbN.